The chain runs to 353 residues: Photosystem II protein D1 (353 aa).

The residue at position 2 (threonine 2) is an N-acetylthreonine. Threonine 2 carries the post-translational modification Phosphothreonine. Helical transmembrane passes span 29–46 (YIGWFGVIMIPCLLTATS), 118–133 (HFLLGVACYMGREWEL), and 142–156 (WIAVAYSAPVAAATA). Histidine 118 contacts chlorophyll a. Tyrosine 126 contributes to the pheophytin a binding site. Aspartate 170 and glutamate 189 together coordinate [CaMn4O5] cluster. Residues 197 to 218 (FHMLGVAGVFGGSLFSAMHGSL) form a helical membrane-spanning segment. Chlorophyll a is bound at residue histidine 198. Residues histidine 215 and 264–265 (SF) each bind a quinone. Position 215 (histidine 215) interacts with Fe cation. Histidine 272 lines the Fe cation pocket. Residues 274-288 (FLAAWPVVGIWFTAL) traverse the membrane as a helical segment. Histidine 332, glutamate 333, aspartate 342, and alanine 344 together coordinate [CaMn4O5] cluster. A propeptide spanning residues 345 to 353 (SVEAPSVNA) is cleaved from the precursor.

This sequence belongs to the reaction center PufL/M/PsbA/D family. As to quaternary structure, PSII is composed of 1 copy each of membrane proteins PsbA, PsbB, PsbC, PsbD, PsbE, PsbF, PsbH, PsbI, PsbJ, PsbK, PsbL, PsbM, PsbT, PsbX, PsbY, PsbZ, Psb30/Ycf12, at least 3 peripheral proteins of the oxygen-evolving complex and a large number of cofactors. It forms dimeric complexes. The cofactor is The D1/D2 heterodimer binds P680, chlorophylls that are the primary electron donor of PSII, and subsequent electron acceptors. It shares a non-heme iron and each subunit binds pheophytin, quinone, additional chlorophylls, carotenoids and lipids. D1 provides most of the ligands for the Mn4-Ca-O5 cluster of the oxygen-evolving complex (OEC). There is also a Cl(-1) ion associated with D1 and D2, which is required for oxygen evolution. The PSII complex binds additional chlorophylls, carotenoids and specific lipids.. Post-translationally, tyr-161 forms a radical intermediate that is referred to as redox-active TyrZ, YZ or Y-Z. C-terminally processed by CTPA; processing is essential to allow assembly of the oxygen-evolving complex and thus photosynthetic growth.

The protein resides in the plastid. The protein localises to the chloroplast thylakoid membrane. The catalysed reaction is 2 a plastoquinone + 4 hnu + 2 H2O = 2 a plastoquinol + O2. In terms of biological role, photosystem II (PSII) is a light-driven water:plastoquinone oxidoreductase that uses light energy to abstract electrons from H(2)O, generating O(2) and a proton gradient subsequently used for ATP formation. It consists of a core antenna complex that captures photons, and an electron transfer chain that converts photonic excitation into a charge separation. The D1/D2 (PsbA/PsbD) reaction center heterodimer binds P680, the primary electron donor of PSII as well as several subsequent electron acceptors. This is Photosystem II protein D1 from Oltmannsiellopsis viridis (Marine flagellate).